Reading from the N-terminus, the 193-residue chain is Non-specific lipid transfer protein GPI-anchored 10 (193 aa).

An N-terminal signal peptide occupies residues 1 to 24; it reads MASSTLLITLLISLSAFFLRMVLA. Disulfide bonds link Cys-30-Cys-71, Cys-40-Cys-55, Cys-56-Cys-98, and Cys-69-Cys-107. N-linked (GlcNAc...) asparagine glycans are attached at residues Asn-76, Asn-87, and Asn-103. The segment at 109-140 is disordered; sequence SSFPGEAPSDSSSVAPPPSSSTGSQISQGAKN. Residues 116-132 are compositionally biased toward low complexity; it reads PSDSSSVAPPPSSSTGS. The N-linked (GlcNAc...) asparagine glycan is linked to Asn-140. Ser-168 is lipidated: GPI-anchor amidated serine. Residues 169–193 constitute a propeptide, removed in mature form; it reads SGSKSEIQLTIFALAAILPAALLLI.

It belongs to the plant LTP family.

It localises to the cell membrane. Functionally, probable lipid transfer protein. This chain is Non-specific lipid transfer protein GPI-anchored 10, found in Arabidopsis thaliana (Mouse-ear cress).